We begin with the raw amino-acid sequence, 195 residues long: Imidazoleglycerol-phosphate dehydratase (195 aa).

Belongs to the imidazoleglycerol-phosphate dehydratase family.

The protein resides in the cytoplasm. It carries out the reaction D-erythro-1-(imidazol-4-yl)glycerol 3-phosphate = 3-(imidazol-4-yl)-2-oxopropyl phosphate + H2O. The protein operates within amino-acid biosynthesis; L-histidine biosynthesis; L-histidine from 5-phospho-alpha-D-ribose 1-diphosphate: step 6/9. This Geobacillus sp. (strain WCH70) protein is Imidazoleglycerol-phosphate dehydratase.